The chain runs to 140 residues: Complex III assembly factor LYRM7 (140 aa).

The interval 93–140 (QYEFVNDQPPQRKKRGKIQIDDEQPTTCCGGGCGKPMPSNNSEKSTCS) is disordered. Over residues 130 to 140 (PSNNSEKSTCS) the composition is skewed to polar residues.

It belongs to the complex I LYR family. In terms of assembly, interacts with UQCRFS1.

The protein localises to the mitochondrion matrix. Its function is as follows. Assembly factor required for Rieske Fe-S protein UQCRFS1 incorporation into the cytochrome b-c1 (CIII) complex. Functions as a chaperone, binding to this subunit within the mitochondrial matrix and stabilizing it prior to its translocation and insertion into the late CIII dimeric intermediate within the mitochondrial inner membrane. The protein is Complex III assembly factor LYRM7 (lyrm7) of Dictyostelium discoideum (Social amoeba).